Here is a 62-residue protein sequence, read N- to C-terminus: NLYQFKNMIQCANHGRRATWHYLDYGCYCGPGGLGTPVDELDRCCKTHDDCYIEAGKKGCFP.

Tyr28, Gly30, and Gly32 together coordinate Ca(2+). Cys29 and Cys45 are joined by a disulfide. His48 is an active-site residue. Position 49 (Asp49) interacts with Ca(2+).

Ca(2+) serves as cofactor. As to expression, expressed by the venom gland.

It localises to the secreted. It carries out the reaction a 1,2-diacyl-sn-glycero-3-phosphocholine + H2O = a 1-acyl-sn-glycero-3-phosphocholine + a fatty acid + H(+). Its function is as follows. Snake venom phospholipase A2 (PLA2) that inhibits collagen-induced platelet aggregation. In terms of inhibition of platelet aggregation, superbin a is more potent as superbin b, c, and d. PLA2 catalyzes the calcium-dependent hydrolysis of the 2-acyl groups in 3-sn-phosphoglycerides. This is Phospholipase A2 superbin a from Austrelaps superbus (Lowland copperhead snake).